The following is a 94-amino-acid chain: Selenoprotein K (94 aa).

Residues 20-42 (LSFLTDFFWGAVEFIGLFFQTLV) form a helical membrane-spanning segment. Positions 48–94 (KDGNNSASSRFSDGRGPPGFPGRRRMGRINHGAGPTPPPMGGGGUGR) are disordered. Polar residues predominate over residues 49–58 (DGNNSASSRF). Sec92 is a non-standard amino acid (selenocysteine).

The protein belongs to the selenoprotein K family.

Its subcellular location is the endoplasmic reticulum membrane. The protein resides in the cell membrane. Its function is as follows. Required for Ca(2+) flux in immune cells and plays a role in T-cell proliferation and in T-cell and neutrophil migration. Involved in endoplasmic reticulum-associated degradation (ERAD) of soluble glycosylated proteins. Required for cell surface expression of CD36 and involved in macrophage uptake of low-density lipoprotein and in foam cell formation. Required for palmitoylation. The protein is Selenoprotein K (selenok) of Danio rerio (Zebrafish).